A 359-amino-acid chain; its full sequence is Protein RecA (359 aa).

77–84 (GPESSGKT) contributes to the ATP binding site.

Belongs to the RecA family.

It is found in the cytoplasm. Its function is as follows. Can catalyze the hydrolysis of ATP in the presence of single-stranded DNA, the ATP-dependent uptake of single-stranded DNA by duplex DNA, and the ATP-dependent hybridization of homologous single-stranded DNAs. It interacts with LexA causing its activation and leading to its autocatalytic cleavage. This is Protein RecA from Azospirillum lipoferum (strain 4B).